The following is a 335-amino-acid chain: Fructose-1,6-bisphosphatase class 1 (335 aa).

Mg(2+) contacts are provided by Glu-90, Asp-112, Leu-114, and Asp-115. Residues 115–118 (DGSS), Asn-210, and Lys-276 each bind substrate. Glu-282 serves as a coordination point for Mg(2+).

It belongs to the FBPase class 1 family. As to quaternary structure, homotetramer. It depends on Mg(2+) as a cofactor.

The protein resides in the cytoplasm. It carries out the reaction beta-D-fructose 1,6-bisphosphate + H2O = beta-D-fructose 6-phosphate + phosphate. It functions in the pathway carbohydrate biosynthesis; gluconeogenesis. This chain is Fructose-1,6-bisphosphatase class 1, found in Ectopseudomonas mendocina (strain ymp) (Pseudomonas mendocina).